Here is a 220-residue protein sequence, read N- to C-terminus: Probable cutinase 5 (220 aa).

Positions 1 to 18 (MVALHTLLLTAFAAVSLA) are cleaved as a signal peptide. Cystine bridges form between C42–C121 and C68–C82. Residue S132 is the Nucleophile of the active site. Residues C183 and C190 are joined by a disulfide bond. Residue D187 is part of the active site. H200 acts as the Proton donor/acceptor in catalysis.

It belongs to the cutinase family.

It localises to the secreted. The catalysed reaction is cutin + H2O = cutin monomers.. Functionally, catalyzes the hydrolysis of complex carboxylic polyesters found in the cell wall of plants. Degrades cutin, a macromolecule that forms the structure of the plant cuticle. This Aspergillus terreus (strain NIH 2624 / FGSC A1156) protein is Probable cutinase 5.